Here is a 356-residue protein sequence, read N- to C-terminus: Transcription factor MafB (356 aa).

2 disordered regions span residues 49 to 79 (RLQPQGSVSSTPISTPCSSVPSSPSFSPTEQ) and 140 to 240 (YRGA…LNVE). Low complexity predominate over residues 55-77 (SVSSTPISTPCSSVPSSPSFSPT). Composition is skewed to basic residues over residues 183 to 196 (AHGHHPHHHHHHHH) and 212 to 223 (HHRHHHHHHPHG). The segment at 270-295 (RLKQKRRTLKNRGYAQSCRFKRVQQK) is basic motif. Residues 270–333 (RLKQKRRTLK…DAYKLKCEKL (64 aa)) enclose the bZIP domain. Residues 298–319 (LENEKTQLINQVEQLKQEINRL) are leucine-zipper.

It belongs to the bZIP family. Maf subfamily. As to quaternary structure, homodimer or heterodimer with other bHLH-Zip transcription factors. Binds DNA as a homodimer or a heterodimer.

The protein localises to the nucleus. May act as a transcriptional activator or repressor. Involved in neurogenesis. Involved in the development of rhombomeres (r) 5 and 6 segments from their common precursor 'proto-segment' in the hindbrain. This chain is Transcription factor MafB (mafb), found in Danio rerio (Zebrafish).